Here is a 940-residue protein sequence, read N- to C-terminus: Protein translocase subunit SecA (940 aa).

ATP-binding positions include glutamine 87, 105 to 109, and aspartate 494; that span reads GEGKT. A disordered region spans residues 879–940; it reads AQQQKKAVEG…KCHGASEASV (62 aa). The segment covering 884–898 has biased composition (basic and acidic residues); that stretch reads KAVEGRATADGKLDE. The span at 900–915 shows a compositional bias: low complexity; the sequence is SVAAAARPAAASRPAV. Positions 921, 923, 932, and 933 each coordinate Zn(2+).

The protein belongs to the SecA family. Monomer and homodimer. Part of the essential Sec protein translocation apparatus which comprises SecA, SecYEG and auxiliary proteins SecDF-YajC and YidC. Zn(2+) is required as a cofactor.

The protein resides in the cell inner membrane. The protein localises to the cytoplasm. The enzyme catalyses ATP + H2O + cellular proteinSide 1 = ADP + phosphate + cellular proteinSide 2.. Functionally, part of the Sec protein translocase complex. Interacts with the SecYEG preprotein conducting channel. Has a central role in coupling the hydrolysis of ATP to the transfer of proteins into and across the cell membrane, serving as an ATP-driven molecular motor driving the stepwise translocation of polypeptide chains across the membrane. The protein is Protein translocase subunit SecA of Myxococcus xanthus (strain DK1622).